The primary structure comprises 62 residues: Weak neurotoxin 5 (62 aa).

5 cysteine pairs are disulfide-bonded: Cys3-Cys24, Cys6-Cys11, Cys17-Cys40, Cys44-Cys54, and Cys55-Cys60.

This sequence belongs to the three-finger toxin family. Ancestral subfamily. Orphan group II sub-subfamily. In terms of tissue distribution, expressed by the venom gland.

Its subcellular location is the secreted. Functionally, binds with low affinity to muscular (alpha-1-beta-1-delta-epsilon/CHRNA1-CHRNB1-CHRND-CHRNE) and very low affinity to neuronal (alpha-7/CHRNA7) nicotinic acetylcholine receptor (nAChR). The polypeptide is Weak neurotoxin 5 (Naja naja (Indian cobra)).